Here is a 363-residue protein sequence, read N- to C-terminus: Ferredoxin--NADP reductase, cyanelle (363 aa).

A cyanelle-targeting transit peptide spans 1-65 (MAFVASVPVF…TFEVDTTIRA (65 aa)). Residues 84-206 (ANPYIGKCIY…TGPVGTTMLM (123 aa)) form the FAD-binding FR-type domain. Residues 142 to 145 (RLYS), 163 to 165 (SVK), Y169, 180 to 182 (VCS), and T221 each bind FAD. NADP(+) is bound by residues S145 and K165. NADP(+) is bound by residues T221, 253–254 (VP), 283–284 (SR), K293, 322–323 (GL), and E361.

It belongs to the ferredoxin--NADP reductase type 1 family. FAD serves as cofactor.

The protein resides in the plastid. The protein localises to the cyanelle stroma. Its subcellular location is the cyanelle thylakoid membrane. The enzyme catalyses 2 reduced [2Fe-2S]-[ferredoxin] + NADP(+) + H(+) = 2 oxidized [2Fe-2S]-[ferredoxin] + NADPH. Its function is as follows. May play a key role in regulating the relative amounts of cyclic and non-cyclic electron flow to meet the demands of the plant for ATP and reducing power. The polypeptide is Ferredoxin--NADP reductase, cyanelle (PETH) (Cyanophora paradoxa).